The sequence spans 219 residues: Pyridoxine/pyridoxamine 5'-phosphate oxidase (219 aa).

Residues 13 to 16 and Lys76 each bind substrate; that span reads RVEY. FMN contacts are provided by residues 71-76, 86-87, Lys93, and Gln115; these read RSVLCK and FT. Substrate-binding residues include Tyr133, Arg137, and Ser141. Residues 150 to 151 and Trp196 contribute to the FMN site; that span reads QS. 202 to 204 serves as a coordination point for substrate; sequence RVH. Arg206 serves as a coordination point for FMN.

This sequence belongs to the pyridoxamine 5'-phosphate oxidase family. In terms of assembly, homodimer. The cofactor is FMN.

The catalysed reaction is pyridoxamine 5'-phosphate + O2 + H2O = pyridoxal 5'-phosphate + H2O2 + NH4(+). It carries out the reaction pyridoxine 5'-phosphate + O2 = pyridoxal 5'-phosphate + H2O2. The protein operates within cofactor metabolism; pyridoxal 5'-phosphate salvage; pyridoxal 5'-phosphate from pyridoxamine 5'-phosphate: step 1/1. It functions in the pathway cofactor metabolism; pyridoxal 5'-phosphate salvage; pyridoxal 5'-phosphate from pyridoxine 5'-phosphate: step 1/1. In terms of biological role, catalyzes the oxidation of either pyridoxine 5'-phosphate (PNP) or pyridoxamine 5'-phosphate (PMP) into pyridoxal 5'-phosphate (PLP). The protein is Pyridoxine/pyridoxamine 5'-phosphate oxidase of Mycobacterium leprae (strain TN).